Consider the following 590-residue polypeptide: Pentatricopeptide repeat-containing protein At1g63070, mitochondrial (590 aa).

A mitochondrion-targeting transit peptide spans Met-1 to Phe-34. 14 PPR repeats span residues Ser-74–His-108, Asn-109–Pro-143, Ser-144–Pro-178, Asp-179–Pro-213, Asp-214–Ala-248, Asp-249–Pro-283, Asp-284–Pro-318, Asp-319–Phe-353, Asp-355–Gly-389, Asn-390–Pro-424, Asp-425–Leu-459, Asp-460–Pro-494, Asn-495–Pro-529, and Asn-530–Gly-564.

This sequence belongs to the PPR family. P subfamily.

Its subcellular location is the mitochondrion. This is Pentatricopeptide repeat-containing protein At1g63070, mitochondrial from Arabidopsis thaliana (Mouse-ear cress).